We begin with the raw amino-acid sequence, 658 residues long: Pentatricopeptide repeat-containing protein At1g69290 (658 aa).

Disordered regions lie at residues 1 to 23 (MFRK…ESPS) and 39 to 61 (TLSP…KSSF). Positions 50–61 (PKTLTPDQKSSF) are enriched in polar residues. PPR repeat units follow at residues 214 to 249 (DLVA…GVKP), 250 to 284 (DELS…GFAS), 285 to 320 (RRIL…GEES), 323 to 353 (SVET…AQKL), 361 to 395 (DSSV…GGGS), 397 to 431 (GIGV…GLQL), 432 to 466 (DVEI…RVVD), 467 to 497 (LKGS…VVED), 503 to 537 (NSHD…RYEP), 538 to 568 (NNQT…IKGK), and 581 to 615 (DHAL…KIFV).

This sequence belongs to the PPR family. P subfamily.

The sequence is that of Pentatricopeptide repeat-containing protein At1g69290 from Arabidopsis thaliana (Mouse-ear cress).